The following is a 200-amino-acid chain: Riboflavin kinase (200 aa).

The disordered stretch occupies residues 1-20; it reads MATARPSIVGPDSGPESPFP. Threonine 42 and asparagine 44 together coordinate Mg(2+). Glutamate 110 functions as the Nucleophile in the catalytic mechanism.

This sequence belongs to the flavokinase family. Zn(2+) serves as cofactor. Requires Mg(2+) as cofactor.

It carries out the reaction riboflavin + ATP = FMN + ADP + H(+). The protein operates within cofactor biosynthesis; FMN biosynthesis; FMN from riboflavin (ATP route): step 1/1. In terms of biological role, catalyzes the phosphorylation of riboflavin (vitamin B2) to form flavin mononucleotide (FMN) coenzyme. The sequence is that of Riboflavin kinase (FMN1) from Pyricularia oryzae (strain 70-15 / ATCC MYA-4617 / FGSC 8958) (Rice blast fungus).